Reading from the N-terminus, the 388-residue chain is Venom acid phosphatase Acph-1 (388 aa).

An N-terminal signal peptide occupies residues 1 to 15 (MSVIAILAMVVGVQA). His-26 serves as the catalytic Nucleophile. 2 disulfides stabilise this stretch: Cys-145-Cys-355 and Cys-330-Cys-334. Asn-182 and Asn-228 each carry an N-linked (GlcNAc...) asparagine glycan. Glu-273 functions as the Proton donor in the catalytic mechanism. Asn-366 carries N-linked (GlcNAc...) asparagine glycosylation.

This sequence belongs to the histidine acid phosphatase family. Expressed by the venom gland.

It localises to the secreted. It carries out the reaction a phosphate monoester + H2O = an alcohol + phosphate. This Apis mellifera (Honeybee) protein is Venom acid phosphatase Acph-1.